Here is a 130-residue protein sequence, read N- to C-terminus: Histone H2A type 3 (130 aa).

Residues 1 to 22 form a disordered region; it reads MSGRGKQGGKARAKAKSRSSRA. Residue serine 2 is modified to N-acetylserine. Phosphoserine; by RPS6KA5 is present on serine 2. A Citrulline; alternate modification is found at arginine 4. Arginine 4 bears the Symmetric dimethylarginine; by PRMT5; alternate mark. N6-(2-hydroxyisobutyryl)lysine is present on lysine 6. Basic residues predominate over residues 7–19; that stretch reads QGGKARAKAKSRS. Lysine 10 carries the post-translational modification N6-(2-hydroxyisobutyryl)lysine; alternate. N6-(beta-hydroxybutyryl)lysine; alternate is present on residues lysine 10 and lysine 14. At lysine 10 the chain carries N6-lactoyllysine; alternate. At lysine 10 the chain carries N6-succinyllysine; alternate. Lysine 14 participates in a covalent cross-link: Glycyl lysine isopeptide (Lys-Gly) (interchain with G-Cter in ubiquitin); alternate. Lysine 16 participates in a covalent cross-link: Glycyl lysine isopeptide (Lys-Gly) (interchain with G-Cter in ubiquitin). Position 37 is an N6-(2-hydroxyisobutyryl)lysine; alternate (lysine 37). Lysine 37 is modified (N6-(beta-hydroxybutyryl)lysine; alternate). Lysine 37 is modified (N6-crotonyllysine; alternate). N6-(2-hydroxyisobutyryl)lysine is present on residues lysine 75 and lysine 76. Residue lysine 96 is modified to N6-(2-hydroxyisobutyryl)lysine; alternate. N6-(beta-hydroxybutyryl)lysine; alternate is present on lysine 96. Residue lysine 96 is modified to N6-succinyllysine; alternate. Position 96 is an N6-glutaryllysine; alternate (lysine 96). Glutamine 105 is subject to N5-methylglutamine. Lysine 119 is subject to N6-(2-hydroxyisobutyryl)lysine; alternate. Position 119 is an N6-(beta-hydroxybutyryl)lysine; alternate (lysine 119). N6-crotonyllysine; alternate is present on residues lysine 119 and lysine 120. Residues lysine 119 and lysine 120 each carry the N6-glutaryllysine; alternate modification. Lysine 120 is covalently cross-linked (Glycyl lysine isopeptide (Lys-Gly) (interchain with G-Cter in ubiquitin); alternate). A Phosphothreonine; by DCAF1 modification is found at threonine 121. Position 126 is an N6-crotonyllysine; alternate (lysine 126). Lysine 126 is subject to N6-glutaryllysine; alternate.

Belongs to the histone H2A family. The nucleosome is a histone octamer containing two molecules each of H2A, H2B, H3 and H4 assembled in one H3-H4 heterotetramer and two H2A-H2B heterodimers. The octamer wraps approximately 147 bp of DNA. In terms of processing, deiminated on Arg-4 in granulocytes upon calcium entry. Monoubiquitination of Lys-120 (H2AK119Ub) by RING1, TRIM37 and RNF2/RING2 complex gives a specific tag for epigenetic transcriptional repression and participates in X chromosome inactivation of female mammals. It is involved in the initiation of both imprinted and random X inactivation. Ubiquitinated H2A is enriched in inactive X chromosome chromatin. Ubiquitination of H2A functions downstream of methylation of 'Lys-27' of histone H3 (H3K27me). H2AK119Ub by RNF2/RING2 can also be induced by ultraviolet and may be involved in DNA repair. Monoubiquitination of Lys-120 (H2AK119Ub) by TRIM37 may promote transformation of cells in a number of breast cancers. Following DNA double-strand breaks (DSBs), it is ubiquitinated through 'Lys-63' linkage of ubiquitin moieties by the E2 ligase UBE2N and the E3 ligases RNF8 and RNF168, leading to the recruitment of repair proteins to sites of DNA damage. Ubiquitination at Lys-14 and Lys-16 (H2AK13Ub and H2AK15Ub, respectively) in response to DNA damage is initiated by RNF168 that mediates monoubiquitination at these 2 sites, and 'Lys-63'-linked ubiquitin are then conjugated to monoubiquitin; RNF8 is able to extend 'Lys-63'-linked ubiquitin chains in vitro. Deubiquitinated by USP51 at Lys-14 and Lys-16 (H2AK13Ub and H2AK15Ub, respectively) after damaged DNA is repaired. H2AK119Ub and ionizing radiation-induced 'Lys-63'-linked ubiquitination (H2AK13Ub and H2AK15Ub) are distinct events. Post-translationally, phosphorylation on Ser-2 (H2AS1ph) is enhanced during mitosis. Phosphorylation on Ser-2 by RPS6KA5/MSK1 directly represses transcription. Acetylation of H3 inhibits Ser-2 phosphorylation by RPS6KA5/MSK1. Phosphorylation at Thr-121 (H2AT120ph) by DCAF1 is present in the regulatory region of many tumor suppresor genes and down-regulates their transcription. In terms of processing, glutamine methylation at Gln-105 (H2AQ104me) by FBL is specifically dedicated to polymerase I. It is present at 35S ribosomal DNA locus and impairs binding of the FACT complex. Symmetric dimethylation on Arg-4 by the PRDM1/PRMT5 complex may play a crucial role in the germ-cell lineage. Post-translationally, crotonylation (Kcr) is specifically present in male germ cells and marks testis-specific genes in post-meiotic cells, including X-linked genes that escape sex chromosome inactivation in haploid cells. Crotonylation marks active promoters and enhancers and confers resistance to transcriptional repressors. It is also associated with post-meiotically activated genes on autosomes. In terms of processing, lactylated in macrophages by EP300/P300 by using lactoyl-CoA directly derived from endogenous or exogenous lactate, leading to stimulates gene transcription.

The protein resides in the nucleus. Its subcellular location is the chromosome. Its function is as follows. Core component of nucleosome. Nucleosomes wrap and compact DNA into chromatin, limiting DNA accessibility to the cellular machineries which require DNA as a template. Histones thereby play a central role in transcription regulation, DNA repair, DNA replication and chromosomal stability. DNA accessibility is regulated via a complex set of post-translational modifications of histones, also called histone code, and nucleosome remodeling. This is Histone H2A type 3 from Homo sapiens (Human).